The chain runs to 512 residues: ATP synthase subunit alpha (512 aa).

169 to 176 (GDRQTGKT) is a binding site for ATP.

The protein belongs to the ATPase alpha/beta chains family. F-type ATPases have 2 components, CF(1) - the catalytic core - and CF(0) - the membrane proton channel. CF(1) has five subunits: alpha(3), beta(3), gamma(1), delta(1), epsilon(1). CF(0) has four main subunits: a(1), b(1), b'(1) and c(9-12).

Its subcellular location is the cell inner membrane. The catalysed reaction is ATP + H2O + 4 H(+)(in) = ADP + phosphate + 5 H(+)(out). In terms of biological role, produces ATP from ADP in the presence of a proton gradient across the membrane. The alpha chain is a regulatory subunit. In Roseobacter denitrificans (strain ATCC 33942 / OCh 114) (Erythrobacter sp. (strain OCh 114)), this protein is ATP synthase subunit alpha.